Reading from the N-terminus, the 181-residue chain is Peptide deformylase (181 aa).

2 residues coordinate Fe cation: C99 and H141. The active site involves E142. H145 lines the Fe cation pocket.

Belongs to the polypeptide deformylase family. Requires Fe(2+) as cofactor.

The catalysed reaction is N-terminal N-formyl-L-methionyl-[peptide] + H2O = N-terminal L-methionyl-[peptide] + formate. Removes the formyl group from the N-terminal Met of newly synthesized proteins. Requires at least a dipeptide for an efficient rate of reaction. N-terminal L-methionine is a prerequisite for activity but the enzyme has broad specificity at other positions. In Chlamydia trachomatis serovar A (strain ATCC VR-571B / DSM 19440 / HAR-13), this protein is Peptide deformylase.